We begin with the raw amino-acid sequence, 267 residues long: Hydroxyethylthiazole kinase (267 aa).

Residue Met49 coordinates substrate. Arg124 and Thr170 together coordinate ATP. Position 197 (Gly197) interacts with substrate.

This sequence belongs to the Thz kinase family. Mg(2+) serves as cofactor.

The catalysed reaction is 5-(2-hydroxyethyl)-4-methylthiazole + ATP = 4-methyl-5-(2-phosphooxyethyl)-thiazole + ADP + H(+). The protein operates within cofactor biosynthesis; thiamine diphosphate biosynthesis; 4-methyl-5-(2-phosphoethyl)-thiazole from 5-(2-hydroxyethyl)-4-methylthiazole: step 1/1. Functionally, catalyzes the phosphorylation of the hydroxyl group of 4-methyl-5-beta-hydroxyethylthiazole (THZ). The chain is Hydroxyethylthiazole kinase from Tolumonas auensis (strain DSM 9187 / NBRC 110442 / TA 4).